The following is a 448-amino-acid chain: Tryptophan dimethylallyltransferase 2 (448 aa).

L-tryptophan-binding positions include isoleucine 80 to leucine 81 and glutamate 89. Substrate is bound by residues arginine 100, lysine 186, and tyrosine 188. 2 residues coordinate L-tryptophan: tyrosine 190 and arginine 249. Residues arginine 262, lysine 264, tyrosine 266, glutamine 348, tyrosine 350, tyrosine 414, and tyrosine 418 each contribute to the substrate site.

Belongs to the tryptophan dimethylallyltransferase family. As to quaternary structure, homodimer.

The enzyme catalyses L-tryptophan + dimethylallyl diphosphate = 4-(3-methylbut-2-enyl)-L-tryptophan + diphosphate. It participates in alkaloid biosynthesis; ergot alkaloid biosynthesis. In terms of biological role, catalyzes the first step of ergot alkaloid biosynthesis. Ergot alkaloids, which are produced by endophyte fungi, can enhance plant host fitness, but also cause livestock toxicosis to host plants. In Claviceps purpurea (strain 20.1) (Ergot fungus), this protein is Tryptophan dimethylallyltransferase 2 (dmaW2).